The sequence spans 430 residues: 3-phosphoshikimate 1-carboxyvinyltransferase (430 aa).

Positions 21, 22, and 26 each coordinate 3-phosphoshikimate. Lysine 21 contributes to the phosphoenolpyruvate binding site. Positions 95 and 123 each coordinate phosphoenolpyruvate. Positions 167, 169, 315, and 342 each coordinate 3-phosphoshikimate. Glutamine 169 is a phosphoenolpyruvate binding site. Aspartate 315 functions as the Proton acceptor in the catalytic mechanism. Phosphoenolpyruvate contacts are provided by arginine 346 and arginine 390.

The protein belongs to the EPSP synthase family. As to quaternary structure, monomer.

Its subcellular location is the cytoplasm. It carries out the reaction 3-phosphoshikimate + phosphoenolpyruvate = 5-O-(1-carboxyvinyl)-3-phosphoshikimate + phosphate. It participates in metabolic intermediate biosynthesis; chorismate biosynthesis; chorismate from D-erythrose 4-phosphate and phosphoenolpyruvate: step 6/7. In terms of biological role, catalyzes the transfer of the enolpyruvyl moiety of phosphoenolpyruvate (PEP) to the 5-hydroxyl of shikimate-3-phosphate (S3P) to produce enolpyruvyl shikimate-3-phosphate and inorganic phosphate. This Endomicrobium trichonymphae protein is 3-phosphoshikimate 1-carboxyvinyltransferase.